The primary structure comprises 398 residues: Dual specificity protein phosphatase 4 (398 aa).

Residue valine 2 is modified to N-acetylvaline. Residues serine 45–serine 163 form the Rhodanese domain. In terms of domain architecture, Tyrosine-protein phosphatase spans glycine 199 to threonine 340. The active-site Phosphocysteine intermediate is the cysteine 284. A phosphoserine; by MAPK mark is found at serine 390 and serine 395.

The protein belongs to the protein-tyrosine phosphatase family. Non-receptor class dual specificity subfamily. As to quaternary structure, hollow spherical complex composed of 24 subunits with pseudooctahedral symmetry, has a tetramer as the basic unit. Post-translationally, phosphorylation in the C-terminus by ERK1/2 inhibits proteasomal degradation and stabilizes the protein.

Its subcellular location is the nucleus. The enzyme catalyses O-phospho-L-tyrosyl-[protein] + H2O = L-tyrosyl-[protein] + phosphate. It catalyses the reaction O-phospho-L-seryl-[protein] + H2O = L-seryl-[protein] + phosphate. The catalysed reaction is O-phospho-L-threonyl-[protein] + H2O = L-threonyl-[protein] + phosphate. Functionally, regulates mitogenic signal transduction by dephosphorylating both Thr and Tyr residues on MAP kinases ERK1 and ERK2. The polypeptide is Dual specificity protein phosphatase 4 (Dusp4) (Mus musculus (Mouse)).